The chain runs to 152 residues: Transcriptional regulator MraZ (152 aa).

SpoVT-AbrB domains lie at 5 to 52 (ASAI…PIQE) and 81 to 124 (AHEC…DEAA).

This sequence belongs to the MraZ family. As to quaternary structure, forms oligomers.

It is found in the cytoplasm. The protein resides in the nucleoid. The sequence is that of Transcriptional regulator MraZ from Shewanella halifaxensis (strain HAW-EB4).